Reading from the N-terminus, the 264-residue chain is MKPTTIASLQKCKQDKKRFATITAYDYSFAKLFAEEGLNVMLVGDSLGMTVQGHDSTLPVTVADIAYHTAAVRRGAPNCLLLADLPFMAYATPEQAFENAATVMRAGANMVKIEGGEWLVETVQMLTERAVPVCGHLGLTPQSVNIFGGYKVQGRGDEAGDRLLSDALALEAAGAQLLVLECVPVELAKRITEALAIPVIGIGAGNVTDGQILVMHDAFGITGGHIPKFAKNFLAETGDIRAAVRQYMAEVESGVYPGEEHSFH.

Residues D45 and D84 each contribute to the Mg(2+) site. 3-methyl-2-oxobutanoate is bound by residues 45–46 (DS), D84, and K112. Position 114 (E114) interacts with Mg(2+). E181 acts as the Proton acceptor in catalysis.

Belongs to the PanB family. As to quaternary structure, homodecamer; pentamer of dimers. The cofactor is Mg(2+).

Its subcellular location is the cytoplasm. The enzyme catalyses 3-methyl-2-oxobutanoate + (6R)-5,10-methylene-5,6,7,8-tetrahydrofolate + H2O = 2-dehydropantoate + (6S)-5,6,7,8-tetrahydrofolate. It participates in cofactor biosynthesis; (R)-pantothenate biosynthesis; (R)-pantoate from 3-methyl-2-oxobutanoate: step 1/2. In terms of biological role, catalyzes the reversible reaction in which hydroxymethyl group from 5,10-methylenetetrahydrofolate is transferred onto alpha-ketoisovalerate to form ketopantoate. This is 3-methyl-2-oxobutanoate hydroxymethyltransferase from Escherichia coli O1:K1 / APEC.